A 226-amino-acid chain; its full sequence is Ribose-5-phosphate isomerase A (226 aa).

Substrate-binding positions include 28–31 (TGST), 80–83 (DGAD), and 93–96 (KGGG). Glutamate 102 functions as the Proton acceptor in the catalytic mechanism. Position 120 (lysine 120) interacts with substrate.

The protein belongs to the ribose 5-phosphate isomerase family. Homodimer.

It catalyses the reaction aldehydo-D-ribose 5-phosphate = D-ribulose 5-phosphate. The protein operates within carbohydrate degradation; pentose phosphate pathway; D-ribose 5-phosphate from D-ribulose 5-phosphate (non-oxidative stage): step 1/1. Catalyzes the reversible conversion of ribose-5-phosphate to ribulose 5-phosphate. The sequence is that of Ribose-5-phosphate isomerase A from Caulobacter sp. (strain K31).